The primary structure comprises 1032 residues: Putative oxidoreductase YgfK (1032 aa).

In terms of domain architecture, 4Fe-4S ferredoxin-type spans 928-958; it reads RFQTLHLDAYCNECGNCAQFCPWNGKPYKDK. The [4Fe-4S] cluster site is built by Cys938, Cys941, Cys944, and Cys948.

Requires [4Fe-4S] cluster as cofactor.

In terms of biological role, could be an iron-sulfur flavoprotein with NADPH:O(2) oxidoreductase activity. This Escherichia coli (strain K12) protein is Putative oxidoreductase YgfK (ygfK).